We begin with the raw amino-acid sequence, 227 residues long: PKHD-type hydroxylase CC_0027 (227 aa).

One can recognise a Fe2OG dioxygenase domain in the interval 78 to 178 (TILSPMFNRY…RTASFFWIQS (101 aa)). 3 residues coordinate Fe cation: histidine 96, aspartate 98, and histidine 159. A 2-oxoglutarate-binding site is contributed by arginine 169.

It depends on Fe(2+) as a cofactor. The cofactor is L-ascorbate.

In Caulobacter vibrioides (strain ATCC 19089 / CIP 103742 / CB 15) (Caulobacter crescentus), this protein is PKHD-type hydroxylase CC_0027.